Reading from the N-terminus, the 89-residue chain is Small ribosomal subunit protein uS15 (89 aa).

Positions 1-21 are enriched in basic and acidic residues; the sequence is MAISQERKNEIIKEYARHEGD. The interval 1–24 is disordered; the sequence is MAISQERKNEIIKEYARHEGDTGS.

The protein belongs to the universal ribosomal protein uS15 family. As to quaternary structure, part of the 30S ribosomal subunit. Forms a bridge to the 50S subunit in the 70S ribosome, contacting the 23S rRNA.

Functionally, one of the primary rRNA binding proteins, it binds directly to 16S rRNA where it helps nucleate assembly of the platform of the 30S subunit by binding and bridging several RNA helices of the 16S rRNA. Forms an intersubunit bridge (bridge B4) with the 23S rRNA of the 50S subunit in the ribosome. The sequence is that of Small ribosomal subunit protein uS15 from Enterococcus faecalis (strain ATCC 700802 / V583).